The following is a 183-amino-acid chain: Large ribosomal subunit protein uL6 (183 aa).

Belongs to the universal ribosomal protein uL6 family. In terms of assembly, part of the 50S ribosomal subunit.

This protein binds to the 23S rRNA, and is important in its secondary structure. It is located near the subunit interface in the base of the L7/L12 stalk, and near the tRNA binding site of the peptidyltransferase center. The polypeptide is Large ribosomal subunit protein uL6 (Moorella thermoacetica (strain ATCC 39073 / JCM 9320)).